The following is a 141-amino-acid chain: MAKKVVKMVKLQIPAGKANPAPPVGPALGQAQVNIPSFCSQFNETTKDQMGFIIPVIISVYEDRTFTFVTKTPPASDLLKKAAKIDAGSANAKQTKVATISKSQLQEIANLKLRDLNAYSVEQACKIIAGTARNMGILIED.

The protein belongs to the universal ribosomal protein uL11 family. Part of the ribosomal stalk of the 50S ribosomal subunit. Interacts with L10 and the large rRNA to form the base of the stalk. L10 forms an elongated spine to which L12 dimers bind in a sequential fashion forming a multimeric L10(L12)X complex. Post-translationally, one or more lysine residues are methylated.

Functionally, forms part of the ribosomal stalk which helps the ribosome interact with GTP-bound translation factors. The sequence is that of Large ribosomal subunit protein uL11 from Phytoplasma australiense.